We begin with the raw amino-acid sequence, 487 residues long: 1,4-beta-D-glucan cellobiohydrolase CEL6A (487 aa).

A signal peptide spans 1-17 (MASKLFLAAALLQGALS). One can recognise a CBM1 domain in the interval 27–63 (ACAAQWGQCGGQDYTGPTCCQSGSTCVVSNQWYSQCL). 2 disulfide bridges follow: cysteine 35-cysteine 52 and cysteine 46-cysteine 62. Residues 64 to 117 (PGSSNPTTTSRTSTSSSSSTSRTSSSTSRPPSSVPTTPTSVPPTITTTPTTTPT) are compositionally biased toward low complexity. A disordered region spans residues 64 to 127 (PGSSNPTTTS…GGSGPGTTAS (64 aa)). Substrate-binding residues include tryptophan 175 and aspartate 177. The active site involves aspartate 216. Aspartate 262 (proton donor) is an active-site residue. Positions 307, 310, 346, 407, 435, and 439 each coordinate substrate. Catalysis depends on aspartate 441, which acts as the Proton acceptor.

It belongs to the glycosyl hydrolase 6 (cellulase B) family.

It is found in the secreted. The enzyme catalyses Hydrolysis of (1-&gt;4)-beta-D-glucosidic linkages in cellulose and cellotetraose, releasing cellobiose from the non-reducing ends of the chains.. Exoglucanase that plays an important function in biomass degradation by catalyzing the hydrolysis of the non-reducing end beta-1,4-glucosidic linkages in cellulose and cellotetraose to release cellobiose. Shows higher hydrolytic activities on phosphoric acid-swollen cellulose (PSC), beta-glucan, and cellooligosaccharide derivatives than on cellulose, of which the best substrates were cellooligosaccharides. The protein is 1,4-beta-D-glucan cellobiohydrolase CEL6A of Pyricularia oryzae (strain 70-15 / ATCC MYA-4617 / FGSC 8958) (Rice blast fungus).